Here is a 1410-residue protein sequence, read N- to C-terminus: Condensin-1 complex subunit CAP-D2 (1410 aa).

Positions 469–480 (LEPTEHASKEST) are enriched in basic and acidic residues. Disordered stretches follow at residues 469–492 (LEPT…DGEI), 504–525 (HQDS…EKDV), 860–879 (KTKK…NLEA), and 1208–1410 (KEQE…GSRS). A compositionally biased stretch (polar residues) spans 869–879 (ESQNTEENLEA). Residues 1208–1226 (KEQEETARNAEVHREKTKT) show a composition bias toward basic and acidic residues. Acidic residues-rich tracts occupy residues 1240–1284 (PVEE…EEPD) and 1306–1319 (IETE…DSEP). Residues 1323–1339 (QCGTTNPRSLNRKTSGD) are compositionally biased toward polar residues. Acidic residues predominate over residues 1342–1365 (IETESEEEQSDSEEEPSDSEEEPD). The segment covering 1368-1379 (QCGTTNPRSLNQ) has biased composition (polar residues).

This sequence belongs to the CND1 (condensin subunit 1) family. Component of the condensin complex. Present in buds.

It is found in the chromosome. The protein localises to the nucleus. Its function is as follows. Essential protein. Regulatory subunit of the condensin complex, a complex required for conversion of interphase chromatin into mitotic-like condense chromosomes. The condensin complex probably introduces positive supercoils into relaxed DNA in the presence of type I topoisomerases and converts nicked DNA into positive knotted forms in the presence of type II topoisomerases. Required for fertility, growth and euchromatin organization, but not for sister chromatid cohesion. Necessary to maintain normal structural integrity of the meiotic chromosomes during the two nuclear divisions of gametogenesis, especially to maintain compaction of the centromeric repeats and 45S rDNA. Also seems to be involved in crossover formation during meiotic prophase I. Prevents centromeric and pericentromeric heterochromatin repeats association. Contributes to the induction of stress-responsive genes in response to stress treatment. This Arabidopsis thaliana (Mouse-ear cress) protein is Condensin-1 complex subunit CAP-D2.